Here is a 310-residue protein sequence, read N- to C-terminus: Calbindin-32 (310 aa).

EF-hand domains are found at residues 35 to 70, 84 to 120, 131 to 166, 177 to 212, 224 to 259, and 283 to 304; these read LSAN…FVSS, TMLE…EENF, ESSV…LLKE, KLIE…KENF, LTKE…LLEL, and TDKH…LAKI. Ca(2+) is bound by residues D48, D50, N52, Y54, E59, D98, N100, D102, K104, E109, D144, D146, S148, Y150, E155, D190, N192, D194, R196, E201, D237, D239, S241, T243, and E248.

The protein belongs to the calbindin family. Expressed in a large number of neuron of the brain and the thoracic ganglion as well as in two small muscles of the thorax.

This is Calbindin-32 (Cbp53E) from Drosophila melanogaster (Fruit fly).